We begin with the raw amino-acid sequence, 1176 residues long: Histidine kinase 2 (1176 aa).

Residues 1-29 are Cytoplasmic-facing; that stretch reads MSITCELLNLTSKKAKKSSSSDKKWLKKP. The chain crosses the membrane as a helical span at residues 30-50; sequence LFFLILCGSLVIVLVMFLRLG. The Extracellular segment spans residues 51-174; it reads RSQKEETDSC…LEQGLSSYLR (124 aa). The helical transmembrane segment at 175 to 195 threads the bilayer; that stretch reads NAWWCLILGVLVCHKIYVSHS. Over 196–232 the chain is Cytoplasmic; that stretch reads KARGERKEKVHLQEALAPKKQQQRAQTSSRGAGRWRK. A helical membrane pass occupies residues 233-253; the sequence is NILLLGILGGVSFSVWWFWDT. Residues 254-536 are Extracellular-facing; sequence NEEIIMKRRE…CRFKHKLPIP (283 aa). Positions 302–526 constitute a CHASE domain; it reads IPSAIDQRTF…GDPSRNHEMH (225 aa). Residues 537-557 traverse the membrane as a helical segment; that stretch reads WTAITPSILVLVITFLVGYIL. Residues 558–1176 are Cytoplasmic-facing; the sequence is YEAINRIATV…TAVARFFEPC (619 aa). The region spanning 594–867 is the Histidine kinase domain; sequence TVSHEIRTPM…TFSFTGVFGK (274 aa). Histidine 597 carries the phosphohistidine; by autocatalysis modification. 2 Response regulatory domains span residues 891-1013 and 1036-1173; these read RALV…QETL and QILV…ARFF. 4-aspartylphosphate occurs at positions 942 and 1086.

As to quaternary structure, self-interacts. Interacts with AHK3, AHP1, AHP2, AHP3, AHP5, ATAF2, AT2S3, BETAA-AD, CYP20-2, DRP1A, HIR1, HIR2, PI4KB1, PI4KG5 and At4g12060. Post-translationally, autophosphorylated predominantly on His residues. Activation probably requires a transfer of a phosphate group between a His in the transmitter domain and an Asp of the receiver domain. In terms of tissue distribution, expressed in roots, leaves and flowers, mostly in the vascular tissues. Present in seedlings.

The protein localises to the endoplasmic reticulum membrane. It catalyses the reaction ATP + protein L-histidine = ADP + protein N-phospho-L-histidine.. Its activity is regulated as follows. Activated by cytokinins to initiate phosphorelay signaling. Functionally, cytokinins (CK) receptor related to bacterial two-component regulators. Functions as a histidine kinase and transmits the stress signal to a downstream MAPK cascade. This protein undergoes an ATP-dependent autophosphorylation at a conserved histidine residue in the kinase core, and a phosphoryl group is then transferred to a conserved aspartate residue in the receiver domain. In the presence of cytokinin, feeds phosphate to phosphorelay-integrating histidine phosphotransfer protein (HPt) and activates subsequent cascade. Involved in meristems establishment in seedlings. Redundant negative regulator of drought and salt stress responses and abscisic acid (ABA) signaling. Together with AHK3, plays a negative regulatory role in cold stress signaling via inhibition of ABA response, occurring independently of the cold acclimation pathway. Redundant positive regulator of cytokinin signaling that regulates many developmental processes including seed germination, cell division, seed size, chlorophyll retention during leaf senescence, root repression and shoot promotion. Involved in alkamides (e.g. N-isobutyl decanamide) and N-acylethanolamides (NAE) signaling that control meristematic activity and differentiation processes during plant development. Contributes to vascular bundle formation and secondary growth in a cytokinin-dependent manner, probably by promoting the maintenance of mitotic activity and/or identity of procambial cells. Together with AHK4, required for growth and reproduction promotion stimulated by the endophytic fungus Piriformospora indica in a trans-zeatin-dependent manner. Required by the cytokinin-dependent flower development regulation pathway. The sequence is that of Histidine kinase 2 (AHK2) from Arabidopsis thaliana (Mouse-ear cress).